A 704-amino-acid chain; its full sequence is Elongation factor G (704 aa).

The 284-residue stretch at 8–291 (DRVRNIGIMA…AVIDYLASPV (284 aa)) folds into the tr-type G domain. GTP is bound by residues 17 to 24 (AHIDAGKT), 90 to 94 (DTPGH), and 144 to 147 (NKMD).

This sequence belongs to the TRAFAC class translation factor GTPase superfamily. Classic translation factor GTPase family. EF-G/EF-2 subfamily.

It is found in the cytoplasm. Its function is as follows. Catalyzes the GTP-dependent ribosomal translocation step during translation elongation. During this step, the ribosome changes from the pre-translocational (PRE) to the post-translocational (POST) state as the newly formed A-site-bound peptidyl-tRNA and P-site-bound deacylated tRNA move to the P and E sites, respectively. Catalyzes the coordinated movement of the two tRNA molecules, the mRNA and conformational changes in the ribosome. This chain is Elongation factor G, found in Chlorobaculum tepidum (strain ATCC 49652 / DSM 12025 / NBRC 103806 / TLS) (Chlorobium tepidum).